Reading from the N-terminus, the 214-residue chain is Molybdenum cofactor guanylyltransferase (214 aa).

GTP-binding positions include 18 to 20, Lys31, Asp77, and Asp112; that span reads LAG. Asp112 is a Mg(2+) binding site.

The protein belongs to the MobA family. In terms of assembly, monomer. The cofactor is Mg(2+).

The protein localises to the cytoplasm. It carries out the reaction Mo-molybdopterin + GTP + H(+) = Mo-molybdopterin guanine dinucleotide + diphosphate. In terms of biological role, transfers a GMP moiety from GTP to Mo-molybdopterin (Mo-MPT) cofactor (Moco or molybdenum cofactor) to form Mo-molybdopterin guanine dinucleotide (Mo-MGD) cofactor. The protein is Molybdenum cofactor guanylyltransferase of Rhodopseudomonas palustris (strain HaA2).